We begin with the raw amino-acid sequence, 147 residues long: MRVLLQRVKEASVTVEEEVVGAINAGYLLLVGVTHEDTEEEVNWLADKVTGLRVFEDDQEKMNLSIQDVSGQILSVSQFTLYGDTMKGRRPAFTKAAKPDMAETLYEKFNERLRANGLIVETGRFGAMMDVALVNDGPVTLMLEKNA.

Residues 137–138 carry the Gly-cisPro motif, important for rejection of L-amino acids motif; sequence GP.

It belongs to the DTD family. Homodimer.

It is found in the cytoplasm. The enzyme catalyses glycyl-tRNA(Ala) + H2O = tRNA(Ala) + glycine + H(+). The catalysed reaction is a D-aminoacyl-tRNA + H2O = a tRNA + a D-alpha-amino acid + H(+). Functionally, an aminoacyl-tRNA editing enzyme that deacylates mischarged D-aminoacyl-tRNAs. Also deacylates mischarged glycyl-tRNA(Ala), protecting cells against glycine mischarging by AlaRS. Acts via tRNA-based rather than protein-based catalysis; rejects L-amino acids rather than detecting D-amino acids in the active site. By recycling D-aminoacyl-tRNA to D-amino acids and free tRNA molecules, this enzyme counteracts the toxicity associated with the formation of D-aminoacyl-tRNA entities in vivo and helps enforce protein L-homochirality. The polypeptide is D-aminoacyl-tRNA deacylase (Exiguobacterium sp. (strain ATCC BAA-1283 / AT1b)).